A 261-amino-acid polypeptide reads, in one-letter code: Phosphatidylglycerol--prolipoprotein diacylglyceryl transferase (261 aa).

Transmembrane regions (helical) follow at residues 12 to 32 (ISIR…VYLA), 41 to 61 (IIPD…IVGA), 87 to 107 (GIAG…LYFF), and 112 to 132 (LIHP…AQSI). Residue arginine 134 participates in a 1,2-diacyl-sn-glycero-3-phospho-(1'-sn-glycerol) binding. Helical transmembrane passes span 170-190 (QPTF…IIVL), 200-220 (GEIA…IEGM), and 229-249 (GLRV…GIII).

This sequence belongs to the Lgt family.

The protein localises to the cell membrane. The catalysed reaction is L-cysteinyl-[prolipoprotein] + a 1,2-diacyl-sn-glycero-3-phospho-(1'-sn-glycerol) = an S-1,2-diacyl-sn-glyceryl-L-cysteinyl-[prolipoprotein] + sn-glycerol 1-phosphate + H(+). The protein operates within protein modification; lipoprotein biosynthesis (diacylglyceryl transfer). In terms of biological role, catalyzes the transfer of the diacylglyceryl group from phosphatidylglycerol to the sulfhydryl group of the N-terminal cysteine of a prolipoprotein, the first step in the formation of mature lipoproteins. This is Phosphatidylglycerol--prolipoprotein diacylglyceryl transferase from Streptococcus sanguinis (strain SK36).